The primary structure comprises 257 residues: uncharacterized protein (257 aa).

The first 22 residues, Met1–Gly22, serve as a signal peptide directing secretion. The N-palmitoyl cysteine moiety is linked to residue Cys23. Cys23 carries the S-diacylglycerol cysteine lipid modification.

This sequence belongs to the staphylococcal tandem lipoprotein family.

The protein resides in the cell membrane. This is an uncharacterized protein from Staphylococcus aureus (strain USA300).